The primary structure comprises 101 residues: NAD(P)H-quinone oxidoreductase subunit 4L, chloroplastic (101 aa).

3 consecutive transmembrane segments (helical) span residues Met2–Ile22, Met32–Phe52, and Ile61–Val81.

This sequence belongs to the complex I subunit 4L family. NDH is composed of at least 16 different subunits, 5 of which are encoded in the nucleus.

It is found in the plastid. Its subcellular location is the chloroplast thylakoid membrane. It catalyses the reaction a plastoquinone + NADH + (n+1) H(+)(in) = a plastoquinol + NAD(+) + n H(+)(out). The enzyme catalyses a plastoquinone + NADPH + (n+1) H(+)(in) = a plastoquinol + NADP(+) + n H(+)(out). Its function is as follows. NDH shuttles electrons from NAD(P)H:plastoquinone, via FMN and iron-sulfur (Fe-S) centers, to quinones in the photosynthetic chain and possibly in a chloroplast respiratory chain. The immediate electron acceptor for the enzyme in this species is believed to be plastoquinone. Couples the redox reaction to proton translocation, and thus conserves the redox energy in a proton gradient. This is NAD(P)H-quinone oxidoreductase subunit 4L, chloroplastic from Populus alba (White poplar).